Here is a 367-residue protein sequence, read N- to C-terminus: Peptide chain release factor 2 (367 aa).

The residue at position 254 (Gln-254) is an N5-methylglutamine.

This sequence belongs to the prokaryotic/mitochondrial release factor family. In terms of processing, methylated by PrmC. Methylation increases the termination efficiency of RF2.

The protein resides in the cytoplasm. In terms of biological role, peptide chain release factor 2 directs the termination of translation in response to the peptide chain termination codons UGA and UAA. In Neisseria meningitidis serogroup B (strain ATCC BAA-335 / MC58), this protein is Peptide chain release factor 2.